The following is a 372-amino-acid chain: Chaperone protein DnaJ (372 aa).

Residues 5–69 (DYYEVLGVSK…DKRKQYDQFG (65 aa)) enclose the J domain. The CR-type zinc finger occupies 139 to 221 (GVDKIIELDL…CKGKGKYLER (83 aa)). Residues Cys152, Cys155, Cys169, Cys172, Cys195, Cys198, Cys209, and Cys212 each coordinate Zn(2+). CXXCXGXG motif repeat units lie at residues 152-159 (CSVCFGSG), 169-176 (CNNCHGTG), 195-202 (CNVCNGAG), and 209-216 (CKNCKGKG).

Belongs to the DnaJ family. Homodimer. Zn(2+) is required as a cofactor.

The protein localises to the cytoplasm. In terms of biological role, participates actively in the response to hyperosmotic and heat shock by preventing the aggregation of stress-denatured proteins and by disaggregating proteins, also in an autonomous, DnaK-independent fashion. Unfolded proteins bind initially to DnaJ; upon interaction with the DnaJ-bound protein, DnaK hydrolyzes its bound ATP, resulting in the formation of a stable complex. GrpE releases ADP from DnaK; ATP binding to DnaK triggers the release of the substrate protein, thus completing the reaction cycle. Several rounds of ATP-dependent interactions between DnaJ, DnaK and GrpE are required for fully efficient folding. Also involved, together with DnaK and GrpE, in the DNA replication of plasmids through activation of initiation proteins. The protein is Chaperone protein DnaJ of Mycoplasma mycoides subsp. mycoides SC (strain CCUG 32753 / NCTC 10114 / PG1).